The following is a 357-amino-acid chain: Fructose-bisphosphate aldolase (357 aa).

Residues arginine 49 and lysine 140 each coordinate substrate. The active-site Proton acceptor is glutamate 183. Residue lysine 225 is the Schiff-base intermediate with dihydroxyacetone-P of the active site.

This sequence belongs to the class I fructose-bisphosphate aldolase family.

It catalyses the reaction beta-D-fructose 1,6-bisphosphate = D-glyceraldehyde 3-phosphate + dihydroxyacetone phosphate. The protein operates within carbohydrate degradation; glycolysis; D-glyceraldehyde 3-phosphate and glycerone phosphate from D-glucose: step 4/4. The chain is Fructose-bisphosphate aldolase (fba) from Dictyostelium discoideum (Social amoeba).